The following is a 233-amino-acid chain: Cell surface glycoprotein gp42 (233 aa).

The first 16 residues, 1–16 (MLLWMVLLLCVSMTEA), serve as a signal peptide directing secretion. Ig-like domains follow at residues 23-98 (PVLS…GTIQ) and 115-195 (PVLT…RDIS). 3 N-linked (GlcNAc...) asparagine glycosylation sites follow: Asn-29, Asn-66, and Asn-181. 2 disulfide bridges follow: Cys-40–Cys-88 and Cys-136–Cys-184. A lipid anchor (GPI-anchor amidated glycine) is attached at Gly-206. A propeptide spans 207–233 (TASMKSTTVVIWLPVSCLVGWPWLLRF) (removed in mature form).

As to expression, NK cells.

It localises to the cell membrane. In Rattus norvegicus (Rat), this protein is Cell surface glycoprotein gp42.